Reading from the N-terminus, the 388-residue chain is Succinate--CoA ligase [ADP-forming] subunit beta (388 aa).

Residues Lys9 to Lys245 form the ATP-grasp domain. Residues Lys46, Gly53–Gly55, Glu100, Tyr103, and Glu108 contribute to the ATP site. Residues Asn200 and Asp214 each coordinate Mg(2+). Substrate-binding positions include Asn265 and Gly322–Val324.

This sequence belongs to the succinate/malate CoA ligase beta subunit family. As to quaternary structure, heterotetramer of two alpha and two beta subunits. Mg(2+) serves as cofactor.

It carries out the reaction succinate + ATP + CoA = succinyl-CoA + ADP + phosphate. The enzyme catalyses GTP + succinate + CoA = succinyl-CoA + GDP + phosphate. It participates in carbohydrate metabolism; tricarboxylic acid cycle; succinate from succinyl-CoA (ligase route): step 1/1. Functionally, succinyl-CoA synthetase functions in the citric acid cycle (TCA), coupling the hydrolysis of succinyl-CoA to the synthesis of either ATP or GTP and thus represents the only step of substrate-level phosphorylation in the TCA. The beta subunit provides nucleotide specificity of the enzyme and binds the substrate succinate, while the binding sites for coenzyme A and phosphate are found in the alpha subunit. The protein is Succinate--CoA ligase [ADP-forming] subunit beta of Neisseria meningitidis serogroup B (strain ATCC BAA-335 / MC58).